The primary structure comprises 493 residues: Isoniazid-induced protein IniC (493 aa).

In Mycobacterium tuberculosis (strain CDC 1551 / Oshkosh), this protein is Isoniazid-induced protein IniC (iniC).